A 251-amino-acid chain; its full sequence is Flap endonuclease Xni (251 aa).

Mg(2+) is bound at residue D104. The 91-residue stretch at 160–250 (VLPRQLPDYW…SGNLQQLRLK (91 aa)) folds into the 5'-3' exonuclease domain. K(+) is bound by residues L171, A172, P180, V182, and V185. Residues 184–189 (GVGAKT) are interaction with DNA.

This sequence belongs to the Xni family. Requires Mg(2+) as cofactor. K(+) is required as a cofactor.

Functionally, has flap endonuclease activity. During DNA replication, flap endonucleases cleave the 5'-overhanging flap structure that is generated by displacement synthesis when DNA polymerase encounters the 5'-end of a downstream Okazaki fragment. This is Flap endonuclease Xni from Yersinia pseudotuberculosis serotype I (strain IP32953).